The primary structure comprises 334 residues: N-acetyl-gamma-glutamyl-phosphate reductase (334 aa).

The active site involves Cys154.

This sequence belongs to the NAGSA dehydrogenase family. Type 1 subfamily.

The protein localises to the cytoplasm. It catalyses the reaction N-acetyl-L-glutamate 5-semialdehyde + phosphate + NADP(+) = N-acetyl-L-glutamyl 5-phosphate + NADPH + H(+). It participates in amino-acid biosynthesis; L-arginine biosynthesis; N(2)-acetyl-L-ornithine from L-glutamate: step 3/4. In terms of biological role, catalyzes the NADPH-dependent reduction of N-acetyl-5-glutamyl phosphate to yield N-acetyl-L-glutamate 5-semialdehyde. In Buchnera aphidicola subsp. Acyrthosiphon pisum (strain Tuc7), this protein is N-acetyl-gamma-glutamyl-phosphate reductase.